The chain runs to 518 residues: Cell wall biosynthesis protein LcpA (518 aa).

At 1–31 (MTEKYRPVRDIKPAPAAMQSTKQAGHPVFRS) the chain is on the cytoplasmic side. A helical transmembrane segment spans residues 32 to 52 (VVAFVSVLVLLVSGLGYLAVG). At 53 to 518 (KVDGVASGNL…AGGDGPRCVN (466 aa)) the chain is on the periplasmic side. The tract at residues 485–518 (AVTSSTVGQPGADVGEPIESPEFDAGGDGPRCVN) is disordered.

It belongs to the LytR/CpsA/Psr (LCP) family. As to quaternary structure, forms homodimers and homotetramers.

It is found in the cell inner membrane. In terms of biological role, involved in cell wall biosynthesis. May be responsible for the transfer of arabinogalactan onto peptidoglycan. In vitro, has pyrophosphatase activity. In Corynebacterium glutamicum (strain ATCC 13032 / DSM 20300 / JCM 1318 / BCRC 11384 / CCUG 27702 / LMG 3730 / NBRC 12168 / NCIMB 10025 / NRRL B-2784 / 534), this protein is Cell wall biosynthesis protein LcpA.